Here is a 456-residue protein sequence, read N- to C-terminus: Tyrosine phenol-lyase (456 aa).

Residue Lys257 is modified to N6-(pyridoxal phosphate)lysine.

The protein belongs to the beta-eliminating lyase family. In terms of assembly, homotetramer. It depends on pyridoxal 5'-phosphate as a cofactor.

The enzyme catalyses L-tyrosine + H2O = phenol + pyruvate + NH4(+). The polypeptide is Tyrosine phenol-lyase (tpl) (Citrobacter freundii).